The primary structure comprises 198 residues: Protein GrpE (198 aa).

Residues 1–14 (MSNEENKINEEALK) show a composition bias toward basic and acidic residues. The segment at 1-20 (MSNEENKINEEALKQQDAAE) is disordered.

It belongs to the GrpE family. In terms of assembly, homodimer.

Its subcellular location is the cytoplasm. In terms of biological role, participates actively in the response to hyperosmotic and heat shock by preventing the aggregation of stress-denatured proteins, in association with DnaK and GrpE. It is the nucleotide exchange factor for DnaK and may function as a thermosensor. Unfolded proteins bind initially to DnaJ; upon interaction with the DnaJ-bound protein, DnaK hydrolyzes its bound ATP, resulting in the formation of a stable complex. GrpE releases ADP from DnaK; ATP binding to DnaK triggers the release of the substrate protein, thus completing the reaction cycle. Several rounds of ATP-dependent interactions between DnaJ, DnaK and GrpE are required for fully efficient folding. The sequence is that of Protein GrpE from Vibrio vulnificus (strain YJ016).